Consider the following 352-residue polypeptide: 3-dehydroquinate synthase (352 aa).

NAD(+) is bound by residues 60–65 (DGEGAK), 118–119 (TT), lysine 131, lysine 140, and 158–161 (FLET). 3 residues coordinate Zn(2+): glutamate 173, histidine 237, and histidine 253.

The protein belongs to the sugar phosphate cyclases superfamily. Dehydroquinate synthase family. NAD(+) serves as cofactor. Requires Co(2+) as cofactor. Zn(2+) is required as a cofactor.

It is found in the cytoplasm. It carries out the reaction 7-phospho-2-dehydro-3-deoxy-D-arabino-heptonate = 3-dehydroquinate + phosphate. It functions in the pathway metabolic intermediate biosynthesis; chorismate biosynthesis; chorismate from D-erythrose 4-phosphate and phosphoenolpyruvate: step 2/7. Its function is as follows. Catalyzes the conversion of 3-deoxy-D-arabino-heptulosonate 7-phosphate (DAHP) to dehydroquinate (DHQ). In Sulfurisphaera tokodaii (strain DSM 16993 / JCM 10545 / NBRC 100140 / 7) (Sulfolobus tokodaii), this protein is 3-dehydroquinate synthase.